A 158-amino-acid chain; its full sequence is Large ribosomal subunit protein uL11 (158 aa).

This sequence belongs to the universal ribosomal protein uL11 family. In terms of assembly, part of the ribosomal stalk of the 50S ribosomal subunit. Interacts with L10 and the large rRNA to form the base of the stalk. L10 forms an elongated spine to which L12 dimers bind in a sequential fashion forming a multimeric L10(L12)X complex.

In terms of biological role, forms part of the ribosomal stalk which helps the ribosome interact with GTP-bound translation factors. This chain is Large ribosomal subunit protein uL11, found in Methanocella arvoryzae (strain DSM 22066 / NBRC 105507 / MRE50).